We begin with the raw amino-acid sequence, 395 residues long: Peptide-N(4)-(N-acetyl-beta-glucosaminyl)asparagine amidase (395 aa).

Zn(2+)-binding residues include Cys131, Cys134, Cys172, and Cys175. The active-site Nucleophile is the Cys198. Catalysis depends on residues His232 and Asp249. Glu252 serves as a coordination point for substrate. Residues 363 to 395 are disordered; the sequence is PELTKTTPSTDLPSGRQSGSTEWTKSRGENGES. Polar residues predominate over residues 366–385; it reads TKTTPSTDLPSGRQSGSTEW. Residues 386–395 are compositionally biased toward basic and acidic residues; it reads TKSRGENGES.

Belongs to the transglutaminase-like superfamily. PNGase family. Requires Zn(2+) as cofactor.

It is found in the cytoplasm. The enzyme catalyses Hydrolysis of an N(4)-(acetyl-beta-D-glucosaminyl)asparagine residue in which the glucosamine residue may be further glycosylated, to yield a (substituted) N-acetyl-beta-D-glucosaminylamine and a peptide containing an aspartate residue.. In terms of biological role, specifically deglycosylates the denatured form of N-linked glycoproteins in the cytoplasm and assists their proteasome-mediated degradation. Cleaves the beta-aspartyl-glucosamine (GlcNAc) of the glycan and the amide side chain of Asn, converting Asn to Asp. Prefers proteins containing high-mannose over those bearing complex type oligosaccharides. Can recognize misfolded proteins in the endoplasmic reticulum that are exported to the cytosol to be destroyed and deglycosylate them, while it has no activity toward native proteins. Deglycosylation is a prerequisite for subsequent proteasome-mediated degradation of some, but not all, misfolded glycoproteins. This Candida albicans (strain SC5314 / ATCC MYA-2876) (Yeast) protein is Peptide-N(4)-(N-acetyl-beta-glucosaminyl)asparagine amidase (PNG1).